A 473-amino-acid polypeptide reads, in one-letter code: Photosystem II CP43 reaction center protein (473 aa).

The propeptide occupies 1–14 (MKTLYSLRRFYPVE). Residue Thr-15 is modified to N-acetylthreonine. Thr-15 is modified (phosphothreonine). Helical transmembrane passes span 69–93 (LFEV…PHLA), 134–155 (LLGP…KDRN), 178–200 (KALY…RRIT), 255–275 (KPFA…LSYS), and 291–312 (WFNN…ASQA). Position 367 (Glu-367) interacts with [CaMn4O5] cluster. A helical membrane pass occupies residues 447 to 471 (RARAAAAGFEKGIDRDFEPVLFMTP).

Belongs to the PsbB/PsbC family. PsbC subfamily. PSII is composed of 1 copy each of membrane proteins PsbA, PsbB, PsbC, PsbD, PsbE, PsbF, PsbH, PsbI, PsbJ, PsbK, PsbL, PsbM, PsbT, PsbX, PsbY, PsbZ, Psb30/Ycf12, at least 3 peripheral proteins of the oxygen-evolving complex and a large number of cofactors. It forms dimeric complexes. It depends on Binds multiple chlorophylls and provides some of the ligands for the Ca-4Mn-5O cluster of the oxygen-evolving complex. It may also provide a ligand for a Cl- that is required for oxygen evolution. PSII binds additional chlorophylls, carotenoids and specific lipids. as a cofactor.

It is found in the plastid. It localises to the chloroplast thylakoid membrane. In terms of biological role, one of the components of the core complex of photosystem II (PSII). It binds chlorophyll and helps catalyze the primary light-induced photochemical processes of PSII. PSII is a light-driven water:plastoquinone oxidoreductase, using light energy to abstract electrons from H(2)O, generating O(2) and a proton gradient subsequently used for ATP formation. The protein is Photosystem II CP43 reaction center protein of Nuphar advena (Common spatterdock).